A 134-amino-acid polypeptide reads, in one-letter code: Profilin-4 (134 aa).

A disulfide bond links cysteine 13 and cysteine 118. The Involved in PIP2 interaction signature appears at 84 to 100 (AVIRGKKGSGGITIKKT). Phosphothreonine is present on threonine 114.

It belongs to the profilin family. In terms of assembly, occurs in many kinds of cells as a complex with monomeric actin in a 1:1 ratio. Phosphorylated by MAP kinases.

The protein resides in the cytoplasm. It is found in the cytoskeleton. Functionally, binds to actin and affects the structure of the cytoskeleton. At high concentrations, profilin prevents the polymerization of actin, whereas it enhances it at low concentrations. This Olea europaea (Common olive) protein is Profilin-4.